The sequence spans 299 residues: Glycine--tRNA ligase alpha subunit (299 aa).

The protein belongs to the class-II aminoacyl-tRNA synthetase family. Tetramer of two alpha and two beta subunits.

It is found in the cytoplasm. The catalysed reaction is tRNA(Gly) + glycine + ATP = glycyl-tRNA(Gly) + AMP + diphosphate. The sequence is that of Glycine--tRNA ligase alpha subunit from Caulobacter vibrioides (strain ATCC 19089 / CIP 103742 / CB 15) (Caulobacter crescentus).